Reading from the N-terminus, the 492-residue chain is Transmembrane protein 104 homolog (492 aa).

The Cytoplasmic segment spans residues 1-17 (MQSNTDSSTSGTYSQTV). The helical transmembrane segment at 18 to 38 (GLLYVFNLIVGTGALALPKAF) threads the bilayer. The Extracellular portion of the chain corresponds to 39-44 (QTAGWL). The chain crosses the membrane as a helical span at residues 45-65 (LSITLLTFSAFMSYVAATFVI). Topologically, residues 66–113 (EALSVANAVLSKKRRVEYDDVVVADGPSTFEISKKVEVSEMASMFLSK) are cytoplasmic. Residues 114–134 (VSLVFSYFAIIIYLFGDLAIY) traverse the membrane as a helical segment. Topologically, residues 135–176 (STTVPKSAMNIVCATINASTVKSSDPCHESWPEILTRMTVYR) are extracellular. The N-linked (GlcNAc...) asparagine glycan is linked to asparagine 151. Residues 177 to 197 (FFVIIFVVVVCLPMVIAGITK) traverse the membrane as a helical segment. Topologically, residues 198–209 (TRHIQIMTTLSR) are cytoplasmic. The chain crosses the membrane as a helical span at residues 210 to 230 (WAAFILMISLATMQLSSDGAA). Residues 231–237 (AHPPAYN) are Extracellular-facing. The chain crosses the membrane as a helical span at residues 238 to 258 (FHGFGSLFGCAVYAFMCHHSI). Over 259–274 (PSLITPMRTKDNVFGK) the chain is Cytoplasmic. A helical membrane pass occupies residues 275-295 (IALVYGVVGVFYFTLSLTGAF). The Extracellular portion of the chain corresponds to 296-324 (AFEHVQDIYTLNFFHDGNTSFIYSIIDYF). Asparagine 313 carries an N-linked (GlcNAc...) asparagine glycan. The helical transmembrane segment at 325–345 (LALFPIITLTSSYPIIALTLI) threads the bilayer. Residues 346 to 392 (NNFNVVKDILCPKVGQENESLLEADSLVEDNDTDDEREARNARNEKS) are Cytoplasmic-facing. Residues 393–413 (VFDVLVPALVLALPTFLSLLT) form a helical membrane-spanning segment. Residues 414–415 (DD) are Extracellular-facing. A helical membrane pass occupies residues 416 to 436 (MLLLASITGSFPGVAVQFAIP). Topologically, residues 437–466 (CLLVTAARKHARSVLNFPVPRKNNSPFQSP) are cytoplasmic. The helical transmembrane segment at 467-487 (IWIVLISSWAGFSMIMVLLNL) threads the bilayer. Residues 488 to 492 (VGVKF) are Extracellular-facing.

Belongs to the TMEM104 family.

The protein localises to the membrane. This Caenorhabditis elegans protein is Transmembrane protein 104 homolog.